The following is an 82-amino-acid chain: Putative antitoxin Saci_0468 (82 aa).

The protein belongs to the UPF0330 family.

Its function is as follows. Possibly the antitoxin component of a type II toxin-antitoxin (TA) system. This Sulfolobus acidocaldarius (strain ATCC 33909 / DSM 639 / JCM 8929 / NBRC 15157 / NCIMB 11770) protein is Putative antitoxin Saci_0468.